A 634-amino-acid polypeptide reads, in one-letter code: Glutamyl-tRNA(Gln) amidotransferase subunit E (634 aa).

This sequence belongs to the GatB/GatE family. GatE subfamily. Heterodimer of GatD and GatE.

It carries out the reaction L-glutamyl-tRNA(Gln) + L-glutamine + ATP + H2O = L-glutaminyl-tRNA(Gln) + L-glutamate + ADP + phosphate + H(+). Functionally, allows the formation of correctly charged Gln-tRNA(Gln) through the transamidation of misacylated Glu-tRNA(Gln) in organisms which lack glutaminyl-tRNA synthetase. The reaction takes place in the presence of glutamine and ATP through an activated gamma-phospho-Glu-tRNA(Gln). The GatDE system is specific for glutamate and does not act on aspartate. The chain is Glutamyl-tRNA(Gln) amidotransferase subunit E from Sulfolobus acidocaldarius (strain ATCC 33909 / DSM 639 / JCM 8929 / NBRC 15157 / NCIMB 11770).